Here is a 414-residue protein sequence, read N- to C-terminus: Chaperone protein dnaJ 39 (414 aa).

Residues 1–24 (MATHSSRSENKDAGEEDELRRRNP) are compositionally biased toward basic and acidic residues. Residues 1-36 (MATHSSRSENKDAGEEDELRRRNPYEVLGIPSNSTD) form a disordered region. The J domain maps to 23–88 (NPYEVLGIPS…ENRRLYDTTG (66 aa)). Residues 296-324 (EKESLRSTEAQIVSKRTELLKFEAEYHEV) are a coiled coil. Residues 362 to 395 (TKQGSSKSRSWSKKKSSLLMEPREEGEVAVREEG) form a disordered region. A compositionally biased stretch (basic and acidic residues) spans 382 to 395 (EPREEGEVAVREEG).

This sequence belongs to the DnaJ family. C/III subfamily. In terms of tissue distribution, expressed constitutively at low levels in seedlings, roots, leaves, stems, flowers and siliques.

Its subcellular location is the membrane. Its function is as follows. Plays a continuous role in plant development probably in the structural organization of compartments. Seems to be involved in early gravitropic signal transduction within the gravity-perceiving cells (statocytes). The chain is Chaperone protein dnaJ 39 (ATJ39) from Arabidopsis thaliana (Mouse-ear cress).